We begin with the raw amino-acid sequence, 95 residues long: Small ribosomal subunit protein bS6 (95 aa).

This sequence belongs to the bacterial ribosomal protein bS6 family.

Its function is as follows. Binds together with bS18 to 16S ribosomal RNA. This chain is Small ribosomal subunit protein bS6, found in Desulforamulus reducens (strain ATCC BAA-1160 / DSM 100696 / MI-1) (Desulfotomaculum reducens).